The following is a 277-amino-acid chain: Carbonyl reductase [NADPH] 1 (277 aa).

Residue Ser2 is modified to N-acetylserine. At Ser2 the chain carries Phosphoserine. NADP(+)-binding positions include 10–34 (VTGA…GDVV), 63–64 (DI), and Asn90. Glutathione is bound by residues 95–97 (FKV) and Gln106. Ser140 is a binding site for substrate. Glutathione is bound at residue 193–194 (AY). Tyr194 acts as the Proton acceptor in catalysis. NADP(+) contacts are provided by residues 194-198 (YGVTK) and 231-233 (VRT). Lys239 bears the N6-1-carboxyethyl lysine mark. Residues 258–277 (PPGAEGPHGQFVQDKKVEPW) are disordered.

It belongs to the short-chain dehydrogenases/reductases (SDR) family. In terms of assembly, monomer.

The protein localises to the cytoplasm. The enzyme catalyses a secondary alcohol + NADP(+) = a ketone + NADPH + H(+). The catalysed reaction is prostaglandin F2alpha + NADP(+) = prostaglandin E2 + NADPH + H(+). It carries out the reaction prostaglandin E1 + NADP(+) = 15-oxoprostaglandin E1 + NADPH + H(+). It catalyses the reaction menadione + NADPH + H(+) = menadiol + NADP(+). The enzyme catalyses prostaglandin D2 + NADP(+) = 15-oxoprostaglandin D2 + NADPH + H(+). The catalysed reaction is prostaglandin E2 + NADP(+) = 15-oxoprostaglandin E2 + NADPH + H(+). It carries out the reaction prostaglandin F2alpha + NADP(+) = 15-oxoprostaglandin F2alpha + NADPH + H(+). It catalyses the reaction daunorubicin + NADPH + H(+) = 13-dihydrodaunorubicin + NADP(+). The enzyme catalyses S-nitrosoglutathione + NADPH + H(+) = S-(hydroxysulfenamide)glutathione + NADP(+). The catalysed reaction is a primary alcohol + NADP(+) = an aldehyde + NADPH + H(+). It carries out the reaction cortisol + NADPH + H(+) = 20beta-dihydrocortisol + NADP(+). It catalyses the reaction corticosterone + NADPH + H(+) = 20beta-dihydrocorticosterone + NADP(+). Its function is as follows. NADPH-dependent reductase with broad substrate specificity. Catalyzes the reduction of a wide variety of carbonyl compounds including quinones, prostaglandins, menadione, plus various xenobiotics. Catalyzes the reduction of the antitumor anthracyclines doxorubicin and daunorubicin to the cardiotoxic compounds doxorubicinol and daunorubicinol. Can convert prostaglandin E to prostaglandin F2-alpha. Can bind glutathione, which explains its higher affinity for glutathione-conjugated substrates. Catalyzes the reduction of S-nitrosoglutathione. In addition, participates in the glucocorticoid metabolism by catalyzing the NADPH-dependent cortisol/corticosterone into 20beta-dihydrocortisol (20b-DHF) or 20beta-corticosterone (20b-DHB), which are weak agonists of NR3C1 and NR3C2 in adipose tissue. This is Carbonyl reductase [NADPH] 1 from Rattus norvegicus (Rat).